Here is a 79-residue protein sequence, read N- to C-terminus: MSEIGERVKKIVVEHLGVEPEKVVDSASFIDDLGADSLDTVELVMAFEEEFGCEIPDDAAETILTVGDATKFLEKNAKS.

In terms of domain architecture, Carrier spans 2 to 77 (SEIGERVKKI…DATKFLEKNA (76 aa)). Ser-37 carries the O-(pantetheine 4'-phosphoryl)serine modification.

It belongs to the acyl carrier protein (ACP) family. Post-translationally, 4'-phosphopantetheine is transferred from CoA to a specific serine of apo-ACP by AcpS. This modification is essential for activity because fatty acids are bound in thioester linkage to the sulfhydryl of the prosthetic group.

Its subcellular location is the cytoplasm. The protein operates within lipid metabolism; fatty acid biosynthesis. Its function is as follows. Carrier of the growing fatty acid chain in fatty acid biosynthesis. The sequence is that of Acyl carrier protein from Nitrobacter winogradskyi (strain ATCC 25391 / DSM 10237 / CIP 104748 / NCIMB 11846 / Nb-255).